The sequence spans 137 residues: Fluoride-specific ion channel FluC 1 (137 aa).

The next 4 membrane-spanning stretches (helical) occupy residues 4 to 24, 37 to 57, 62 to 82, and 100 to 120; these read LIYIIVGIAGILGALSRYYLG, LATLLINLVGCFLLAWLTTYI, ILPAEIITGIGTGFIGSFTTF, and IAFLYVSCSILGGLIMSGLGY. Na(+) contacts are provided by Gly-77 and Thr-80.

This sequence belongs to the fluoride channel Fluc/FEX (TC 1.A.43) family.

The protein resides in the cell membrane. The enzyme catalyses fluoride(in) = fluoride(out). Na(+) is not transported, but it plays an essential structural role and its presence is essential for fluoride channel function. Its function is as follows. Fluoride-specific ion channel. Important for reducing fluoride concentration in the cell, thus reducing its toxicity. This chain is Fluoride-specific ion channel FluC 1, found in Bacillus cereus (strain ATCC 10987 / NRS 248).